Reading from the N-terminus, the 443-residue chain is Ribosomal protein uS12 methylthiotransferase RimO (443 aa).

One can recognise an MTTase N-terminal domain in the interval 8-118 (PKVGFVSLGC…VVNAVHEVVP (111 aa)). Residues C17, C53, C82, C151, C155, and C158 each contribute to the [4Fe-4S] cluster site. The Radical SAM core domain occupies 137–375 (LTPRHYAYLK…MAHQQAISTA (239 aa)). One can recognise a TRAM domain in the interval 378–443 (QLRIGKEIEV…DEYDMWAEPI (66 aa)).

Belongs to the methylthiotransferase family. RimO subfamily. [4Fe-4S] cluster is required as a cofactor.

It is found in the cytoplasm. The enzyme catalyses L-aspartate(89)-[ribosomal protein uS12]-hydrogen + (sulfur carrier)-SH + AH2 + 2 S-adenosyl-L-methionine = 3-methylsulfanyl-L-aspartate(89)-[ribosomal protein uS12]-hydrogen + (sulfur carrier)-H + 5'-deoxyadenosine + L-methionine + A + S-adenosyl-L-homocysteine + 2 H(+). Functionally, catalyzes the methylthiolation of an aspartic acid residue of ribosomal protein uS12. The polypeptide is Ribosomal protein uS12 methylthiotransferase RimO (Pseudomonas putida (strain GB-1)).